A 370-amino-acid polypeptide reads, in one-letter code: NADH-quinone oxidoreductase subunit D 2 (370 aa).

The protein belongs to the complex I 49 kDa subunit family. In terms of assembly, NDH-1 is composed of 14 different subunits. Subunits NuoB, C, D, E, F, and G constitute the peripheral sector of the complex.

It is found in the cell membrane. The enzyme catalyses a quinone + NADH + 5 H(+)(in) = a quinol + NAD(+) + 4 H(+)(out). In terms of biological role, NDH-1 shuttles electrons from NADH, via FMN and iron-sulfur (Fe-S) centers, to quinones in the respiratory chain. The immediate electron acceptor for the enzyme in this species is believed to be ubiquinone. Couples the redox reaction to proton translocation (for every two electrons transferred, four hydrogen ions are translocated across the cytoplasmic membrane), and thus conserves the redox energy in a proton gradient. This is NADH-quinone oxidoreductase subunit D 2 from Herpetosiphon aurantiacus (strain ATCC 23779 / DSM 785 / 114-95).